Reading from the N-terminus, the 158-residue chain is Transcription elongation factor GreA (158 aa).

Residues 53–73 (EQQGFIEGRIKEIEAKLSNAQ) are a coiled coil.

It belongs to the GreA/GreB family.

In terms of biological role, necessary for efficient RNA polymerase transcription elongation past template-encoded arresting sites. The arresting sites in DNA have the property of trapping a certain fraction of elongating RNA polymerases that pass through, resulting in locked ternary complexes. Cleavage of the nascent transcript by cleavage factors such as GreA or GreB allows the resumption of elongation from the new 3'terminus. GreA releases sequences of 2 to 3 nucleotides. The protein is Transcription elongation factor GreA of Thioalkalivibrio sulfidiphilus (strain HL-EbGR7).